Consider the following 153-residue polypeptide: Prostaglandin E synthase (153 aa).

Topologically, residues Met-1–Ala-13 are lumenal. The chain crosses the membrane as a helical span at residues Leu-14–Lys-42. Arg-39 lines the glutathione pocket. Residues Lys-43–Arg-61 lie on the Cytoplasmic side of the membrane. The helical transmembrane segment at Asp-62–Ser-91 threads the bilayer. Residue Arg-74–Glu-78 coordinates glutathione. At Phe-92–Asp-96 the chain is on the lumenal side. A helical membrane pass occupies residues Pro-97–Gly-120. Positions 114 and 118 each coordinate glutathione. The Cytoplasmic portion of the chain corresponds to Lys-121–Ala-124. The chain crosses the membrane as a helical span at residues Pro-125–Leu-153. A glutathione-binding site is contributed by Arg-127–Tyr-131.

It belongs to the MAPEG family. As to quaternary structure, homotrimer. Glutathione serves as cofactor.

The protein localises to the membrane. It localises to the cytoplasm. The protein resides in the perinuclear region. The enzyme catalyses prostaglandin H2 = prostaglandin E2. The catalysed reaction is 2-glyceryl-prostaglandin H2 = 2-glyceryl-prostaglandin E2. It carries out the reaction prostaglandin G2 = (15S)-15-hydroperoxy-prostaglandin E2. It catalyses the reaction 1-chloro-2,4-dinitrobenzene + glutathione = 2,4-dinitrophenyl-S-glutathione + chloride + H(+). The enzyme catalyses (5S)-hydroperoxy-(6E,8Z,11Z,14Z)-eicosatetraenoate + 2 glutathione = (5S)-hydroxy-(6E,8Z,11Z,14Z)-eicosatetraenoate + glutathione disulfide + H2O. Its pathway is lipid metabolism; prostaglandin biosynthesis. Its function is as follows. Terminal enzyme of the cyclooxygenase (COX)-2-mediated prostaglandin E2 (PGE2) biosynthetic pathway. Catalyzes the glutathione-dependent oxidoreduction of prostaglandin endoperoxide H2 (PGH2) to prostaglandin E2 (PGE2) in response to inflammatory stimuli. Plays a key role in inflammation response, fever and pain. Also catalyzes the oxidoreduction of endocannabinoids into prostaglandin glycerol esters and PGG2 into 15-hydroperoxy-PGE2. In addition, displays low glutathione transferase and glutathione-dependent peroxidase activities, toward 1-chloro-2,4-dinitrobenzene and 5-hydroperoxyicosatetraenoic acid (5-HPETE), respectively. This chain is Prostaglandin E synthase (PTGES), found in Equus caballus (Horse).